Consider the following 148-residue polypeptide: Cystatin-D (148 aa).

The first 33 residues, methionine 1 to alanine 33, serve as a signal peptide directing secretion. The 113-residue stretch at valine 36 to phenylalanine 148 folds into the Cystatin kininogen-type domain. 2 disulfide bridges follow: cysteine 101–cysteine 111 and cysteine 125–cysteine 145.

This sequence belongs to the cystatin family. As to expression, in cartilage, expressed mainly in mature chondrocytes including prehypertrophic and hypertrophic cells (at protein level). Expressed exclusively in cartilage.

The protein resides in the cytoplasm. Its subcellular location is the cytosol. Its function is as follows. May play a role in the last steps of the chondrocyte differentiation pathway as an inducer of maturation. Induces chondrocyte calcification during endochondral ossification by playing a role in the transcriptional inhibition of ENPP1, a generator of pyrophosphate which inhibits calcification. Possibly impairs the binding of a transcription factor to the ENPP1 promoter. Unlike other cystatins, does not have thiol protease inhibitor activity. This Mus musculus (Mouse) protein is Cystatin-D.